Reading from the N-terminus, the 1199-residue chain is Ecdysone-induced protein 75B, isoforms C/D (1199 aa).

The segment at T130–V182 is disordered. 2 stretches are compositionally biased toward low complexity: residues Q139 to Q149 and E162 to H172. The segment at residues T242 to F318 is a DNA-binding region (nuclear receptor). 2 consecutive NR C4-type zinc fingers follow at residues C245–C265 and C282–C306. The NR LBD domain maps to D352 to N600. 6 disordered regions span residues K624–A665, L771–D808, V831–I851, A895–S961, E991–A1104, and V1155–L1188. 5 stretches are compositionally biased toward low complexity: residues G641–L653, S792–S804, V831–S845, A897–Q942, and S950–S961. Polar residues-rich tracts occupy residues S993 to R1006 and A1018 to Q1040. Low complexity-rich tracts occupy residues S1041–S1077, S1086–A1104, and A1159–G1187.

The protein belongs to the nuclear hormone receptor family. NR1 subfamily.

Its subcellular location is the nucleus. Implicated in the regulation of ecdysone-triggered gene hierarchies. Probably plays a key role in mediating the regulation of the larval molt by 20-OH-ecdysone. This chain is Ecdysone-induced protein 75B, isoforms C/D (Eip75B), found in Drosophila melanogaster (Fruit fly).